We begin with the raw amino-acid sequence, 109 residues long: ILGPRGLMPSPKTGTVTKNVEQAIKDAKRGRVEFKVDKAGNIHMPVGKVSFDKAKLLDNIYAAIDAVVRAKPPGAKGQYVKNIALSLTMSPSVKIDINETLRKLQERAA.

The protein belongs to the universal ribosomal protein uL1 family. Part of the 50S ribosomal subunit.

Binds directly to 23S rRNA. The L1 stalk is quite mobile in the ribosome, and is involved in E site tRNA release. Functionally, protein L1 is also a translational repressor protein, it controls the translation of the L11 operon by binding to its mRNA. This Aquifex pyrophilus protein is Large ribosomal subunit protein uL1 (rplA).